Here is a 172-residue protein sequence, read N- to C-terminus: Large ribosomal subunit protein bL17 (172 aa).

The disordered stretch occupies residues 127–172; the sequence is KAAKQDRAKRVKGSKKVTGDVAPAVAPVPSAPAETQEEAKAPESAE. A compositionally biased stretch (low complexity) spans 147-159; it reads VAPAVAPVPSAPA. Positions 163-172 are enriched in basic and acidic residues; that stretch reads EEAKAPESAE.

It belongs to the bacterial ribosomal protein bL17 family. In terms of assembly, part of the 50S ribosomal subunit. Contacts protein L32.

The chain is Large ribosomal subunit protein bL17 from Chlorobium luteolum (strain DSM 273 / BCRC 81028 / 2530) (Pelodictyon luteolum).